Here is a 518-residue protein sequence, read N- to C-terminus: Coiled-coil domain-containing protein 82 (518 aa).

The segment covering 1-14 has biased composition (basic residues); sequence MVHVRRHETRKNSK. Positions 1 to 266 are disordered; the sequence is MVHVRRHETR…EDDYRYDEDG (266 aa). A compositionally biased stretch (basic and acidic residues) spans 16–27; that stretch reads QKPEQKSRVDWH. The segment covering 38–67 has biased composition (acidic residues); the sequence is DSDEELDSNEELDSDEEHDSGESIDSDEEL. The segment covering 68–89 has biased composition (basic and acidic residues); the sequence is DISKKSDINELPEKETELKLIK. Residues 92–107 show a composition bias toward polar residues; that stretch reads SQGSNSKHLTNTSNSS. Residues 111 to 127 show a composition bias toward basic and acidic residues; the sequence is EQLKETKHNDLPDDEAH. Residues Ser170 and Ser194 each carry the phosphoserine modification. Acidic residues predominate over residues 191-201; sequence DECSSLEMEQE. Thr202 bears the Phosphothreonine mark. The stretch at 204 to 232 forms a coiled coil; that stretch reads EKSSAARKREYHQKLQELSERSRQRRRRN. The span at 215–225 shows a compositional bias: basic and acidic residues; that stretch reads HQKLQELSERS. Positions 249–266 are enriched in acidic residues; the sequence is GEEDEDEDEDDYRYDEDG. A Phosphoserine modification is found at Ser305.

In Mus musculus (Mouse), this protein is Coiled-coil domain-containing protein 82 (Ccdc82).